We begin with the raw amino-acid sequence, 72 residues long: PI-stichotoxin-Hcr2j (72 aa).

Positions 1–9 (GFYFRSIQG) are cleaved as a signal peptide. Residues 10 to 17 (FYFKRIQG) constitute a propeptide that is removed on maturation. The region spanning 20 to 70 (CSEPKKVGRCRESFPRFYFDSETGKCTPFIYGGCGGNGNNFETLHACRAIC) is the BPTI/Kunitz inhibitor domain. Cystine bridges form between C20/C70, C29/C53, and C45/C66.

This sequence belongs to the venom Kunitz-type family. Sea anemone type 2 potassium channel toxin subfamily.

It localises to the secreted. The protein resides in the nematocyst. Serine protease inhibitor that acts on trypsin (Ki=190 nM) and to elastase. Does not bind to alpha-chymotrypsin, cathepsin G, and kallikrein. It significantly increases neuroblastoma cell viability in an in vitro neurotoxicity model, being a consequence of an effective decrease of reactive oxygen species (ROS) level in the cells. It also protects cells by inhibiting ATP-induced purinoceptor activation. Its binding affinity to P2RX7 is moderate (Kd=45.5 uM). The protein is PI-stichotoxin-Hcr2j of Radianthus crispa (Leathery sea anemone).